We begin with the raw amino-acid sequence, 150 residues long: D-aminoacyl-tRNA deacylase (150 aa).

The Gly-cisPro motif, important for rejection of L-amino acids signature appears at 138–139 (GP).

The protein belongs to the DTD family. As to quaternary structure, homodimer.

Its subcellular location is the cytoplasm. The catalysed reaction is glycyl-tRNA(Ala) + H2O = tRNA(Ala) + glycine + H(+). It carries out the reaction a D-aminoacyl-tRNA + H2O = a tRNA + a D-alpha-amino acid + H(+). An aminoacyl-tRNA editing enzyme that deacylates mischarged D-aminoacyl-tRNAs. Also deacylates mischarged glycyl-tRNA(Ala), protecting cells against glycine mischarging by AlaRS. Acts via tRNA-based rather than protein-based catalysis; rejects L-amino acids rather than detecting D-amino acids in the active site. By recycling D-aminoacyl-tRNA to D-amino acids and free tRNA molecules, this enzyme counteracts the toxicity associated with the formation of D-aminoacyl-tRNA entities in vivo and helps enforce protein L-homochirality. In Opitutus terrae (strain DSM 11246 / JCM 15787 / PB90-1), this protein is D-aminoacyl-tRNA deacylase.